We begin with the raw amino-acid sequence, 238 residues long: Enolase-phosphatase E1 (238 aa).

Residues aspartate 14 and glutamate 16 each coordinate Mg(2+). Substrate is bound by residues 128–129 (SS) and lysine 165. Aspartate 192 serves as a coordination point for Mg(2+).

This sequence belongs to the HAD-like hydrolase superfamily. MasA/MtnC family. Monomer. Mg(2+) is required as a cofactor.

Its subcellular location is the cytoplasm. The protein resides in the nucleus. The enzyme catalyses 5-methylsulfanyl-2,3-dioxopentyl phosphate + H2O = 1,2-dihydroxy-5-(methylsulfanyl)pent-1-en-3-one + phosphate. It functions in the pathway amino-acid biosynthesis; L-methionine biosynthesis via salvage pathway; L-methionine from S-methyl-5-thio-alpha-D-ribose 1-phosphate: step 3/6. Its pathway is amino-acid biosynthesis; L-methionine biosynthesis via salvage pathway; L-methionine from S-methyl-5-thio-alpha-D-ribose 1-phosphate: step 4/6. In terms of biological role, bifunctional enzyme that catalyzes the enolization of 2,3-diketo-5-methylthiopentyl-1-phosphate (DK-MTP-1-P) into the intermediate 2-hydroxy-3-keto-5-methylthiopentenyl-1-phosphate (HK-MTPenyl-1-P), which is then dephosphorylated to form the acireductone 1,2-dihydroxy-3-keto-5-methylthiopentene (DHK-MTPene). The sequence is that of Enolase-phosphatase E1 from Fusarium vanettenii (strain ATCC MYA-4622 / CBS 123669 / FGSC 9596 / NRRL 45880 / 77-13-4) (Fusarium solani subsp. pisi).